Consider the following 267-residue polypeptide: Small ribosomal subunit protein eS4 (267 aa).

In terms of domain architecture, S4 RNA-binding spans 42–104; the sequence is LPLILVLRNR…TKENFRLLFD (63 aa).

It belongs to the eukaryotic ribosomal protein eS4 family.

It is found in the cytoplasm. This Dictyostelium discoideum (Social amoeba) protein is Small ribosomal subunit protein eS4 (rps4).